Here is a 387-residue protein sequence, read N- to C-terminus: Succinate--CoA ligase [ADP-forming] subunit beta (387 aa).

The ATP-grasp domain maps to 9–236 (KGLFAKHNVP…RAATDPLELK (228 aa)). Residues Lys45, 52–54 (GRG), Ser94, and Glu99 contribute to the ATP site. 2 residues coordinate Mg(2+): Asn191 and Asp205. Substrate is bound by residues Asn256 and 318 to 320 (GIT).

It belongs to the succinate/malate CoA ligase beta subunit family. As to quaternary structure, heterotetramer of two alpha and two beta subunits. It depends on Mg(2+) as a cofactor.

The catalysed reaction is succinate + ATP + CoA = succinyl-CoA + ADP + phosphate. It carries out the reaction GTP + succinate + CoA = succinyl-CoA + GDP + phosphate. Its pathway is carbohydrate metabolism; tricarboxylic acid cycle; succinate from succinyl-CoA (ligase route): step 1/1. In terms of biological role, succinyl-CoA synthetase functions in the citric acid cycle (TCA), coupling the hydrolysis of succinyl-CoA to the synthesis of either ATP or GTP and thus represents the only step of substrate-level phosphorylation in the TCA. The beta subunit provides nucleotide specificity of the enzyme and binds the substrate succinate, while the binding sites for coenzyme A and phosphate are found in the alpha subunit. This chain is Succinate--CoA ligase [ADP-forming] subunit beta, found in Mycobacterium ulcerans (strain Agy99).